A 428-amino-acid polypeptide reads, in one-letter code: 3-phosphoshikimate 1-carboxyvinyltransferase (428 aa).

Lysine 23, serine 24, and arginine 28 together coordinate 3-phosphoshikimate. Lysine 23 contributes to the phosphoenolpyruvate binding site. Glycine 97 and arginine 125 together coordinate phosphoenolpyruvate. 7 residues coordinate 3-phosphoshikimate: serine 170, serine 171, glutamine 172, serine 198, aspartate 314, asparagine 337, and lysine 341. Phosphoenolpyruvate is bound at residue glutamine 172. Aspartate 314 serves as the catalytic Proton acceptor. Positions 345, 387, and 412 each coordinate phosphoenolpyruvate.

The protein belongs to the EPSP synthase family. Monomer.

It is found in the cytoplasm. It catalyses the reaction 3-phosphoshikimate + phosphoenolpyruvate = 5-O-(1-carboxyvinyl)-3-phosphoshikimate + phosphate. Its pathway is metabolic intermediate biosynthesis; chorismate biosynthesis; chorismate from D-erythrose 4-phosphate and phosphoenolpyruvate: step 6/7. Its function is as follows. Catalyzes the transfer of the enolpyruvyl moiety of phosphoenolpyruvate (PEP) to the 5-hydroxyl of shikimate-3-phosphate (S3P) to produce enolpyruvyl shikimate-3-phosphate and inorganic phosphate. The polypeptide is 3-phosphoshikimate 1-carboxyvinyltransferase (Yersinia pestis bv. Antiqua (strain Antiqua)).